A 160-amino-acid chain; its full sequence is Large ribosomal subunit protein uL22c (160 aa).

This sequence belongs to the universal ribosomal protein uL22 family. In terms of assembly, part of the 50S ribosomal subunit.

Its subcellular location is the plastid. The protein resides in the chloroplast. In terms of biological role, this protein binds specifically to 23S rRNA. The globular domain of the protein is located near the polypeptide exit tunnel on the outside of the subunit, while an extended beta-hairpin is found that lines the wall of the exit tunnel in the center of the 70S ribosome. This is Large ribosomal subunit protein uL22c (rpl22) from Aethionema cordifolium (Lebanon stonecress).